The sequence spans 246 residues: Uridylate kinase (246 aa).

18–21 provides a ligand contact to ATP; the sequence is KVSG. Glycine 60 provides a ligand contact to UMP. The ATP site is built by glycine 61 and arginine 65. UMP contacts are provided by residues aspartate 80 and 141–148; that span reads TGNPFFTT. 4 residues coordinate ATP: threonine 168, glutamine 169, tyrosine 174, and aspartate 177.

The protein belongs to the UMP kinase family. As to quaternary structure, homohexamer.

Its subcellular location is the cytoplasm. It carries out the reaction UMP + ATP = UDP + ADP. It participates in pyrimidine metabolism; CTP biosynthesis via de novo pathway; UDP from UMP (UMPK route): step 1/1. With respect to regulation, inhibited by UTP. Functionally, catalyzes the reversible phosphorylation of UMP to UDP. The chain is Uridylate kinase from Granulibacter bethesdensis (strain ATCC BAA-1260 / CGDNIH1).